A 429-amino-acid chain; its full sequence is S-adenosylmethionine synthase (429 aa).

Residue histidine 14 participates in ATP binding. Aspartate 16 lines the Mg(2+) pocket. Glutamate 42 serves as a coordination point for K(+). 2 residues coordinate L-methionine: glutamate 55 and glutamine 98. Positions 98-108 (QSADINRGVDR) are flexible loop. ATP-binding positions include 165 to 167 (DAK), 252 to 253 (KF), aspartate 261, 267 to 268 (RK), alanine 284, and lysine 288. An L-methionine-binding site is contributed by aspartate 261. Lysine 292 provides a ligand contact to L-methionine.

It belongs to the AdoMet synthase family. Homotetramer; dimer of dimers. Mg(2+) is required as a cofactor. It depends on K(+) as a cofactor.

The protein resides in the cytoplasm. It catalyses the reaction L-methionine + ATP + H2O = S-adenosyl-L-methionine + phosphate + diphosphate. It functions in the pathway amino-acid biosynthesis; S-adenosyl-L-methionine biosynthesis; S-adenosyl-L-methionine from L-methionine: step 1/1. Functionally, catalyzes the formation of S-adenosylmethionine (AdoMet) from methionine and ATP. The overall synthetic reaction is composed of two sequential steps, AdoMet formation and the subsequent tripolyphosphate hydrolysis which occurs prior to release of AdoMet from the enzyme. This chain is S-adenosylmethionine synthase, found in Porphyromonas gingivalis (strain ATCC 33277 / DSM 20709 / CIP 103683 / JCM 12257 / NCTC 11834 / 2561).